A 74-amino-acid polypeptide reads, in one-letter code: MIQAAKYIGAGLATIGVSGAGVGIGLIFSNLISGTSRNPSVRPHLFSMAILGFALTEATGLFCLMLAFLIIYAA.

The next 2 membrane-spanning stretches (helical) occupy residues 8 to 28 and 50 to 70; these read IGAG…GLIF and ILGF…AFLI.

The protein belongs to the ATPase C chain family. F-type ATPases have 2 components, CF(1) - the catalytic core - and CF(0) - the membrane proton channel. CF(1) has five subunits: alpha(3), beta(3), gamma(1), delta(1), epsilon(1). CF(0) has three main subunits: a, b and c.

It localises to the mitochondrion membrane. Its function is as follows. Mitochondrial membrane ATP synthase (F(1)F(0) ATP synthase or Complex V) produces ATP from ADP in the presence of a proton gradient across the membrane which is generated by electron transport complexes of the respiratory chain. F-type ATPases consist of two structural domains, F(1) - containing the extramembraneous catalytic core and F(0) - containing the membrane proton channel, linked together by a central stalk and a peripheral stalk. During catalysis, ATP synthesis in the catalytic domain of F(1) is coupled via a rotary mechanism of the central stalk subunits to proton translocation. Part of the complex F(0) domain. A homomeric c-ring of probably 10 subunits is part of the complex rotary element. In Schizosaccharomyces pombe (strain 972 / ATCC 24843) (Fission yeast), this protein is ATP synthase subunit 9, mitochondrial (atp9).